Here is a 431-residue protein sequence, read N- to C-terminus: Glutamate-1-semialdehyde 2,1-aminomutase (431 aa).

Lysine 265 is modified (N6-(pyridoxal phosphate)lysine).

The protein belongs to the class-III pyridoxal-phosphate-dependent aminotransferase family. HemL subfamily. Homodimer. It depends on pyridoxal 5'-phosphate as a cofactor.

The protein resides in the cytoplasm. The catalysed reaction is (S)-4-amino-5-oxopentanoate = 5-aminolevulinate. It participates in porphyrin-containing compound metabolism; protoporphyrin-IX biosynthesis; 5-aminolevulinate from L-glutamyl-tRNA(Glu): step 2/2. The chain is Glutamate-1-semialdehyde 2,1-aminomutase from Vibrio atlanticus (strain LGP32) (Vibrio splendidus (strain Mel32)).